A 402-amino-acid chain; its full sequence is MAANSTPEGPLPVGEVSRLIGGWIDRLGAVWVEGQITQLSRRPGAGVVFLTLRDPSYDISVSVTCYRQVFDAVADVVGEGARVVVHAKPEWYAPRGQLSLRAAEIKPVGVGELLARLEQLKKALAREGLFAAERKQPLPFLPQLIGLVCGRASAAERDVLENARHRWPAVRFEVRNVPVQGVHAVPQVVQAVKELDARDDVDVIVVARGGGSVEDLLPFSDEQLVRAVAACRTPVVSAIGHEPDSPLLDLVADLRASTPTDAAKKVVPDVGEEYERVRLLRDRARRCVAAFVDREERGLAHALARPSIQDPHRMIEERAEQVTALLDRGRRSLRHHLDRADSELTHTHARVVALSPAATLKRGYAVLQRADGHAVRDPGEVEPGETLRARVSEGDFSVRVDA.

Belongs to the XseA family. Heterooligomer composed of large and small subunits.

The protein localises to the cytoplasm. The catalysed reaction is Exonucleolytic cleavage in either 5'- to 3'- or 3'- to 5'-direction to yield nucleoside 5'-phosphates.. In terms of biological role, bidirectionally degrades single-stranded DNA into large acid-insoluble oligonucleotides, which are then degraded further into small acid-soluble oligonucleotides. This chain is Exodeoxyribonuclease 7 large subunit, found in Streptomyces coelicolor (strain ATCC BAA-471 / A3(2) / M145).